The primary structure comprises 211 residues: Methylthioribulose-1-phosphate dehydratase (211 aa).

The Zn(2+) site is built by His-105 and His-107.

Belongs to the aldolase class II family. MtnB subfamily. The cofactor is Zn(2+).

It catalyses the reaction 5-(methylsulfanyl)-D-ribulose 1-phosphate = 5-methylsulfanyl-2,3-dioxopentyl phosphate + H2O. The protein operates within amino-acid biosynthesis; L-methionine biosynthesis via salvage pathway; L-methionine from S-methyl-5-thio-alpha-D-ribose 1-phosphate: step 2/6. Its function is as follows. Catalyzes the dehydration of methylthioribulose-1-phosphate (MTRu-1-P) into 2,3-diketo-5-methylthiopentyl-1-phosphate (DK-MTP-1-P). The protein is Methylthioribulose-1-phosphate dehydratase of Acidiphilium cryptum (strain JF-5).